The primary structure comprises 410 residues: MILRGMEDSKSAQKRFEAAVKVIRSLPEDGSYDLSDDMLVLFYSYYKQATEGPCNTLKPNSWDPIGKAKWEAWKDLGNMSKDQAMTEYVQEIQLIIETLPVTDRMAELLDALDPFYEIVEDDDDDDDEGVSKAAPLFTGSTNADKDAERDEEVESESKEGNLDDYMELVEKQKDLSSTTGEKGSLLVFNRSEENSISSLTDGTHSSLNTVDDEEELVYDGSDDEMDSDSMDKPATPEKGSGVRSVRLADGSVVGANMQHGGNREPQCGSQDGKPQGLISPVPHPPTLGTVRNDRISACSGRERGCQGDGGQRGETADRMDKQAINTQITTILSELEDNMQDVLRRLTTLEQLTASQAEISPSKTWHSDKPKKRLSWWPLNSSPFTAVLTVLWPFAVHWLVQFYLQRRRRR.

The region spanning Ala-12–Val-101 is the ACB domain. An acyl-CoA-binding positions include Ile-23–Tyr-32, Tyr-43–Lys-47, Lys-69, and Tyr-88. A compositionally biased stretch (acidic residues) spans Val-119–Glu-128. 3 disordered regions span residues Val-119–Tyr-165, Ser-221–Val-242, and Gly-254–Asp-320. Positions Thr-326–Ser-355 form a coiled coil. A transmembrane helix spans residues Ser-382–Leu-404.

It is found in the membrane. In terms of biological role, binds medium- and long-chain acyl-CoA esters. The polypeptide is Acyl-CoA-binding domain-containing protein 5-B (acbd5b) (Danio rerio (Zebrafish)).